The chain runs to 59 residues: Salivary thrombin inhibitor XC-43 (59 aa).

The first 23 residues, 1–23 (MNLQFLFIFIAFCVMLFAQIVTA), serve as a signal peptide directing secretion.

Interacts with human F2 (thrombin). As to expression, salivary gland (at protein level).

It is found in the secreted. Anticoagulant protein that acts as a competitive inhibitor of host thrombin. Inhibits thrombin-mediated host platelet aggregation. This Xenopsylla cheopis (Oriental rat flea) protein is Salivary thrombin inhibitor XC-43.